The sequence spans 288 residues: Thiamine-monophosphate kinase (288 aa).

Residues aspartate 20, threonine 30, and aspartate 32 each contribute to the Mg(2+) site. Aspartate 39 is a substrate binding site. Residues aspartate 60 and aspartate 107 each coordinate Mg(2+). ATP-binding positions include 106–107 (GD) and arginine 130. Position 188 (aspartate 188) interacts with Mg(2+). Serine 190 contacts ATP. Aspartate 191 provides a ligand contact to Mg(2+). Tryptophan 286 contributes to the substrate binding site.

The protein belongs to the thiamine-monophosphate kinase family.

It catalyses the reaction thiamine phosphate + ATP = thiamine diphosphate + ADP. Its pathway is cofactor biosynthesis; thiamine diphosphate biosynthesis; thiamine diphosphate from thiamine phosphate: step 1/1. Its function is as follows. Catalyzes the ATP-dependent phosphorylation of thiamine-monophosphate (TMP) to form thiamine-pyrophosphate (TPP), the active form of vitamin B1. The chain is Thiamine-monophosphate kinase from Halobacterium salinarum (strain ATCC 700922 / JCM 11081 / NRC-1) (Halobacterium halobium).